The primary structure comprises 289 residues: Ribosomal protein L11 methyltransferase (289 aa).

S-adenosyl-L-methionine is bound by residues threonine 142, glycine 163, aspartate 185, and asparagine 226.

The protein belongs to the methyltransferase superfamily. PrmA family.

Its subcellular location is the cytoplasm. It carries out the reaction L-lysyl-[protein] + 3 S-adenosyl-L-methionine = N(6),N(6),N(6)-trimethyl-L-lysyl-[protein] + 3 S-adenosyl-L-homocysteine + 3 H(+). In terms of biological role, methylates ribosomal protein L11. In Legionella pneumophila (strain Corby), this protein is Ribosomal protein L11 methyltransferase.